We begin with the raw amino-acid sequence, 549 residues long: Hydroxylamine reductase (549 aa).

Positions 3, 6, 15, and 21 each coordinate [4Fe-4S] cluster. The hybrid [4Fe-2O-2S] cluster site is built by histidine 244, glutamate 268, cysteine 313, cysteine 405, cysteine 433, cysteine 458, glutamate 492, and lysine 494. Cysteine 405 is subject to Cysteine persulfide.

The protein belongs to the HCP family. The cofactor is [4Fe-4S] cluster. Requires hybrid [4Fe-2O-2S] cluster as cofactor.

The protein resides in the cytoplasm. The enzyme catalyses A + NH4(+) + H2O = hydroxylamine + AH2 + H(+). Functionally, catalyzes the reduction of hydroxylamine to form NH(3) and H(2)O. The polypeptide is Hydroxylamine reductase (Gloeothece citriformis (strain PCC 7424) (Cyanothece sp. (strain PCC 7424))).